Consider the following 156-residue polypeptide: Small ribosomal subunit protein uS7 (156 aa).

It belongs to the universal ribosomal protein uS7 family. As to quaternary structure, part of the 30S ribosomal subunit. Contacts proteins S9 and S11.

One of the primary rRNA binding proteins, it binds directly to 16S rRNA where it nucleates assembly of the head domain of the 30S subunit. Is located at the subunit interface close to the decoding center, probably blocks exit of the E-site tRNA. The protein is Small ribosomal subunit protein uS7 of Brucella abortus (strain S19).